The following is a 174-amino-acid chain: Auxin-responsive protein IAA2 (174 aa).

The EAR-like (transcriptional repression) motif lies at leucine 16–leucine 20. The interval phenylalanine 44–valine 67 is disordered. Positions valine 77–glycine 164 constitute a PB1 domain.

The protein belongs to the Aux/IAA family. As to quaternary structure, homodimers and heterodimers. Interacts with the auxin-responsive protein IAA1. Interacts with TPL. As to expression, preferentially expressed in vegetative organs.

The protein localises to the nucleus. Aux/IAA proteins are short-lived transcriptional factors that function as repressors of early auxin response genes at low auxin concentrations. Repression is thought to result from the interaction with auxin response factors (ARFs), proteins that bind to the auxin-responsive promoter element (AuxRE). Formation of heterodimers with ARF proteins may alter their ability to modulate early auxin response genes expression. This is Auxin-responsive protein IAA2 (IAA2) from Arabidopsis thaliana (Mouse-ear cress).